The following is a 347-amino-acid chain: GMP reductase (347 aa).

108–131 (TDFEKTKQILIANPALNFLCIDVA) contacts NADP(+). Positions 181 and 183 each coordinate K(+). Cys186 (thioimidate intermediate) is an active-site residue. Residue 216-239 (IISDGGCTMPGDVAKAFGGGADFV) coordinates NADP(+).

This sequence belongs to the IMPDH/GMPR family. GuaC type 1 subfamily. In terms of assembly, homotetramer.

The catalysed reaction is IMP + NH4(+) + NADP(+) = GMP + NADPH + 2 H(+). Its function is as follows. Catalyzes the irreversible NADPH-dependent deamination of GMP to IMP. It functions in the conversion of nucleobase, nucleoside and nucleotide derivatives of G to A nucleotides, and in maintaining the intracellular balance of A and G nucleotides. The chain is GMP reductase from Enterobacter sp. (strain 638).